A 276-amino-acid chain; its full sequence is D-aminoacyl-tRNA deacylase (276 aa).

The protein belongs to the DtdA deacylase family. Monomer. Zn(2+) is required as a cofactor.

The enzyme catalyses a D-aminoacyl-tRNA + H2O = a tRNA + a D-alpha-amino acid + H(+). It catalyses the reaction glycyl-tRNA(Ala) + H2O = tRNA(Ala) + glycine + H(+). Functionally, D-aminoacyl-tRNA deacylase with broad substrate specificity. By recycling D-aminoacyl-tRNA to D-amino acids and free tRNA molecules, this enzyme counteracts the toxicity associated with the formation of D-aminoacyl-tRNA entities in vivo. The polypeptide is D-aminoacyl-tRNA deacylase (Staphylothermus marinus (strain ATCC 43588 / DSM 3639 / JCM 9404 / F1)).